Consider the following 499-residue polypeptide: Na(+)/H(+) antiporter NhaB (499 aa).

12 helical membrane passes run 38–58, 62–82, 89–109, 128–148, 149–169, 204–224, 242–262, 310–330, 349–369, 393–413, 449–469, and 478–498; these read VSPFLAGWALIIEFIFTLAMA, YPLQPGGLLAIQAVLLGLTSA, VLANFKVILLLMFMVAGIYFM, LLLSLLFSFVAAVLSAFLDAL, TVTAVLIAVAVGFYAVYHRFA, LIMHGAVGTALGGVATLVGEP, LVMAPISVPALIGGLLTCAIL, VLVFALALHLAEVGLIGLLII, FEEALPFTALLVVFFAVVAVI, MFFVANGVLSMISDNVFVATV, ATPNGQAAFLFLLTSALAPLI, and IMALPYTIVLGAVGLGSVILF.

The protein belongs to the NhaB Na(+)/H(+) (TC 2.A.34) antiporter family.

Its subcellular location is the cell inner membrane. It catalyses the reaction 2 Na(+)(in) + 3 H(+)(out) = 2 Na(+)(out) + 3 H(+)(in). Its function is as follows. Na(+)/H(+) antiporter that extrudes sodium in exchange for external protons. The polypeptide is Na(+)/H(+) antiporter NhaB (Saccharophagus degradans (strain 2-40 / ATCC 43961 / DSM 17024)).